The primary structure comprises 521 residues: MPPSLPSLQLRRLLLRSFISSSSVNTLQSQPRIISSKPLFSPLPPSRSSIFSTFPSRFFSSETNAESESLDSNEIALSFSKELTGNPDAESQTISQRFNLSFSHITPNPDLILQTLNLSPEAGRAALGFNEWLDSNSNFSHTDETVSFFVDYFGRRKDFKGMLEIISKYKGIAGGKTLESAIDRLVRAGRPKQVTDFFEKMENDYGLKRDKESLTLVVKKLCEKGHASIAEKMVKNTANEIFPDENICDLLISGWCIAEKLDEATRLAGEMSRGGFEIGTKAYNMMLDCVCKLCRKKDPFKLQPEVEKVLLEMEFRGVPRNTETFNVLINNLCKIRRTEEAMTLFGRMGEWGCQPDAETYLVLIRSLYQAARIGEGDEMIDKMKSAGYGELLNKKEYYGFLKILCGIERLEHAMSVFKSMKANGCKPGIKTYDLLMGKMCANNQLTRANGLYKEAAKKGIAVSPKEYRVDPRFMKKKTKEVDSNVKKRETLPEKTARKKKRLKQINMSFVKKPHNKMRRRM.

A mitochondrion-targeting transit peptide spans 1–59 (MPPSLPSLQLRRLLLRSFISSSSVNTLQSQPRIISSKPLFSPLPPSRSSIFSTFPSRFF). PPR repeat units lie at residues 174-204 (GGKT…MEND), 210-240 (DKES…TANE), 244-278 (DENI…GFEI), 279-313 (GTKA…LLEM), 321-355 (NTET…GCQP), 356-390 (DAET…GYGE), 393-427 (NKKE…GCKP), and 428-462 (GIKT…GIAV). Positions 480 to 495 (EVDSNVKKRETLPEKT) are enriched in basic and acidic residues. Residues 480–499 (EVDSNVKKRETLPEKTARKK) form a disordered region. The short motif at 486–503 (KKRETLPEKTARKKKRLK) is the Nuclear localization signal element.

It belongs to the PPR family. P subfamily. Interacts with NAP1;1 and TCP8. Able to bind mitochondrial RNA in vitro. Component of the mitochondrial ribosome small subunit. As to expression, expressed in root tips, lateral root primordia and leaf primordia. Highly detected in the mature pollen grains.

The protein resides in the mitochondrion matrix. The protein localises to the nucleus. Its function is as follows. RNA-binding protein that functions in both mitochondrion and nucleus. In mitochondrion, it is associated with polysomes and may play a role in translation. Required during embryogenesis. In nucleus, might be involved in the regulation of its own gene expression. The polypeptide is Small ribosomal subunit protein mL104 (rPPR9) (PNM1) (Arabidopsis thaliana (Mouse-ear cress)).